A 307-amino-acid chain; its full sequence is Ribonuclease Z (307 aa).

Residues His64, His66, Asp68, His69, His141, Asp209, and His267 each coordinate Zn(2+). The Proton acceptor role is filled by Asp68.

Belongs to the RNase Z family. As to quaternary structure, homodimer. Zn(2+) is required as a cofactor.

The enzyme catalyses Endonucleolytic cleavage of RNA, removing extra 3' nucleotides from tRNA precursor, generating 3' termini of tRNAs. A 3'-hydroxy group is left at the tRNA terminus and a 5'-phosphoryl group is left at the trailer molecule.. In terms of biological role, zinc phosphodiesterase, which displays some tRNA 3'-processing endonuclease activity. Probably involved in tRNA maturation, by removing a 3'-trailer from precursor tRNA. The polypeptide is Ribonuclease Z (Thermoplasma acidophilum (strain ATCC 25905 / DSM 1728 / JCM 9062 / NBRC 15155 / AMRC-C165)).